The sequence spans 432 residues: MVVTTLNTTKSEEIFAAAQKLMPGGVSSPVRAFKSVGGQPIVFDRVQGAYIWDVDGNQYIDYVGTWGPAICGHAHPEVLNGLKEVLEKGTSFGAPCALENTLAKMVIDAVPSIEMIRFVNSGTEACMAVLRLMRAFTGRDKVIKFEGCYHGHADMFLVKAGSGVATLGLPDSPGVPKHVTKNTLTAPYNDLETVKKLFEENPDQISGVILEPVVGNSGFIVPDAGFLEGLRMITKENGALLVFDEVMTGFRIAYGGAQEKFNVTPDLTTLGKIIGGGLPVGAYGGRQDIMSMVAPAGPMYQAGTLSGNPLAMTAGIKTLELLKKPGTYDQLNKITKRLADGLLNIAKETNNDIWGGHISAMFGIFFNKGPVHNYDDAKKSDLTKFSKFHRGMLEHGIYLAPSQFEAGFTSLAHTEEDIDRTLATAKKVMSSL.

Residue lysine 272 is modified to N6-(pyridoxal phosphate)lysine.

Belongs to the class-III pyridoxal-phosphate-dependent aminotransferase family. HemL subfamily. In terms of assembly, homodimer. Requires pyridoxal 5'-phosphate as cofactor.

It is found in the cytoplasm. The enzyme catalyses (S)-4-amino-5-oxopentanoate = 5-aminolevulinate. It participates in porphyrin-containing compound metabolism; protoporphyrin-IX biosynthesis; 5-aminolevulinate from L-glutamyl-tRNA(Glu): step 2/2. The protein operates within porphyrin-containing compound metabolism; chlorophyll biosynthesis. The protein is Glutamate-1-semialdehyde 2,1-aminomutase of Trichodesmium erythraeum (strain IMS101).